Here is a 787-residue protein sequence, read N- to C-terminus: Integrin beta-6 (787 aa).

The N-terminal stretch at 1-21 (MGIELVCLFLLLLGRNDHVQG) is a signal peptide. The 50-residue stretch at 22–71 (GCAWGGAESCSDCLLTGPHCAWCSQENFTHLSGAGERCDTPANLLAKGCQ) folds into the PSI domain. Topologically, residues 22 to 708 (GCAWGGAESC…KDCPKPPNIP (687 aa)) are extracellular. Intrachain disulfides connect cysteine 23–cysteine 41, cysteine 31–cysteine 454, cysteine 34–cysteine 59, cysteine 44–cysteine 70, cysteine 197–cysteine 204, cysteine 252–cysteine 293, cysteine 394–cysteine 406, cysteine 426–cysteine 452, cysteine 456–cysteine 476, cysteine 467–cysteine 479, cysteine 481–cysteine 490, cysteine 492–cysteine 519, cysteine 502–cysteine 517, cysteine 511–cysteine 522, cysteine 524–cysteine 537, cysteine 539–cysteine 560, cysteine 544–cysteine 558, cysteine 552–cysteine 563, and cysteine 565–cysteine 574. 2 N-linked (GlcNAc...) asparagine glycosylation sites follow: asparagine 48 and asparagine 97. The 241-residue stretch at 131-371 (YPVDLYYLMD…QLIISAYEEL (241 aa)) folds into the VWFA domain. Mg(2+)-binding residues include aspartate 140, serine 142, and serine 144. The Ca(2+) site is built by serine 144, aspartate 147, aspartate 148, and glutamate 179. Asparagine 235, aspartate 237, proline 239, and glutamate 240 together coordinate Ca(2+). Position 240 (glutamate 240) interacts with Mg(2+). An N-linked (GlcNAc...) asparagine glycan is attached at asparagine 260. Ca(2+) is bound by residues aspartate 271 and lysine 355. Asparagine 387 is a glycosylation site (N-linked (GlcNAc...) asparagine). Asparagine 418 carries N-linked (GlcNAc...) asparagine glycosylation. I-EGF domains follow at residues 456-491 (CQREIETNSSKCHNGNGSFQCGVCTCNPGHMGPHCE), 492-538 (CGED…PYCQ), 539-575 (CDNFSCLRHKGLLCGDNGDCDCGECVCRDGWTGEYCN), and 576-615 (CTTNRDSCTSEDGVLCSGRGDCVCGKCVCRNPGASGPTCE). N-linked (GlcNAc...) asparagine glycosylation is found at asparagine 463 and asparagine 471. The N-linked (GlcNAc...) asparagine glycan is linked to asparagine 541. Asparagine 575 is a glycosylation site (N-linked (GlcNAc...) asparagine). 9 disulfides stabilise this stretch: cysteine 576-cysteine 599, cysteine 583-cysteine 597, cysteine 591-cysteine 602, cysteine 604-cysteine 614, cysteine 617-cysteine 620, cysteine 624-cysteine 669, cysteine 630-cysteine 649, cysteine 633-cysteine 645, and cysteine 677-cysteine 701. A helical transmembrane segment spans residues 709 to 729 (MIMLGVSLAILLIGVVLLCIW). An interaction with HAX1 region spans residues 730–757 (KLLVSFHDRKEVAKFEAERSKAKWQTGT). The Cytoplasmic portion of the chain corresponds to 730–787 (KLLVSFHDRKEVAKFEAERSKAKWQTGTNPLYRGSTSTFKNVTYKHREKHKAGLSSDG).

Belongs to the integrin beta chain family. As to quaternary structure, heterodimer of an alpha and a beta subunit. Interacts with FLNB. Interacts with HAX1. ITGAV:ITGB6 interacts with FBN1. ITGAV:ITGB6 interacts with TGFB1.

Its subcellular location is the cell membrane. It is found in the cell junction. The protein resides in the focal adhesion. Functionally, integrin alpha-V:beta-6 (ITGAV:ITGB6) is a receptor for fibronectin and cytotactin. It recognizes the sequence R-G-D in its ligands. ITGAV:ITGB6 acts as a receptor for fibrillin-1 (FBN1) and mediates R-G-D-dependent cell adhesion to FBN1. Integrin alpha-V:beta-6 (ITGAV:ITGB6) mediates R-G-D-dependent release of transforming growth factor beta-1 (TGF-beta-1) from regulatory Latency-associated peptide (LAP), thereby playing a key role in TGF-beta-1 activation. This Mus musculus (Mouse) protein is Integrin beta-6 (Itgb6).